The chain runs to 211 residues: MSEAETLKGTTTIGIVFKDGIILATEKRATMGSMIASKRAKKVYQVADRIGMTTAGGVGDAQQLARIMSVECNLYQIRRGRSISVGASSTLLSNYLNQNRGYPYYVQLLVGGVDATGPSVYSVDAMGGATRESDIVATGSGSPMAYGVLEDRYKKDLTEDEAIELAIRALRAAMRRDSASGEGIHVVIITKDAYSELSEERLEQYTAAVTA.

A propeptide spans 1–9 (MSEAETLKG) (removed in mature form; by autocatalysis). Threonine 10 acts as the Nucleophile in catalysis.

Belongs to the peptidase T1B family. In terms of assembly, the 20S proteasome core is composed of 14 alpha and 14 beta subunits that assemble into four stacked heptameric rings, resulting in a barrel-shaped structure. The two inner rings, each composed of seven catalytic beta subunits, are sandwiched by two outer rings, each composed of seven alpha subunits. The catalytic chamber with the active sites is on the inside of the barrel. Has a gated structure, the ends of the cylinder being occluded by the N-termini of the alpha-subunits. Is capped at one or both ends by the proteasome regulatory ATPase, PAN.

It is found in the cytoplasm. It carries out the reaction Cleavage of peptide bonds with very broad specificity.. The formation of the proteasomal ATPase PAN-20S proteasome complex, via the docking of the C-termini of PAN into the intersubunit pockets in the alpha-rings, triggers opening of the gate for substrate entry. Interconversion between the open-gate and close-gate conformations leads to a dynamic regulation of the 20S proteasome proteolysis activity. Its function is as follows. Component of the proteasome core, a large protease complex with broad specificity involved in protein degradation. This Methanosphaerula palustris (strain ATCC BAA-1556 / DSM 19958 / E1-9c) protein is Proteasome subunit beta.